A 418-amino-acid polypeptide reads, in one-letter code: Serine hydroxymethyltransferase (418 aa).

Residues Leu121 and 125 to 127 contribute to the (6S)-5,6,7,8-tetrahydrofolate site; that span reads GHL. An N6-(pyridoxal phosphate)lysine modification is found at Lys230. (6S)-5,6,7,8-tetrahydrofolate is bound by residues Glu246 and 355–357; that span reads SPF.

Belongs to the SHMT family. As to quaternary structure, homodimer. It depends on pyridoxal 5'-phosphate as a cofactor.

The protein resides in the cytoplasm. The enzyme catalyses (6R)-5,10-methylene-5,6,7,8-tetrahydrofolate + glycine + H2O = (6S)-5,6,7,8-tetrahydrofolate + L-serine. It functions in the pathway one-carbon metabolism; tetrahydrofolate interconversion. It participates in amino-acid biosynthesis; glycine biosynthesis; glycine from L-serine: step 1/1. Catalyzes the reversible interconversion of serine and glycine with tetrahydrofolate (THF) serving as the one-carbon carrier. This reaction serves as the major source of one-carbon groups required for the biosynthesis of purines, thymidylate, methionine, and other important biomolecules. Also exhibits THF-independent aldolase activity toward beta-hydroxyamino acids, producing glycine and aldehydes, via a retro-aldol mechanism. The sequence is that of Serine hydroxymethyltransferase from Streptococcus pneumoniae serotype 19F (strain G54).